A 554-amino-acid chain; its full sequence is Intraflagellar transport protein 56 (554 aa).

Positions 1-27 are disordered; that stretch reads MMLSRAKPAVGGESPHTDKRKKKGRKI. Residues 18-27 show a composition bias toward basic residues; it reads DKRKKKGRKI. 4 TPR repeats span residues 57-90, 92-125, 151-184, and 468-501; these read DDTN…ENCN, EVWV…LQNR, KEDQ…NREY, and ANDC…EGKR.

It belongs to the IFT56 family. Component of the IFT complex B. Interacts with IFT46; the interaction is direct. In terms of tissue distribution, high expression detected in testis. Detected also retina, kidney, lung and brain tissue. The expression level is low in spleen. Expressed in the developing liver. Present in the airway epithelial cells and the testes (at protein level).

It is found in the cell projection. The protein localises to the cilium. Component of the intraflagellar transport (IFT) complex B required for transport of proteins in the motile cilium. Required for transport of specific ciliary cargo proteins related to motility, while it is neither required for IFT complex B assembly or motion nor for cilium assembly. Required for efficient coupling between the accumulation of GLI2 and GLI3 at the ciliary tips and their dissociation from the negative regulator SUFU. Plays a key role in maintaining the integrity of the IFT complex B and the proper ciliary localization of the IFT complex B components. Not required for IFT complex A ciliary localization or function. Essential for maintaining proper microtubule organization within the ciliary axoneme. This chain is Intraflagellar transport protein 56, found in Mus musculus (Mouse).